Reading from the N-terminus, the 115-residue chain is Disintegrin EC6 subunit alpha (115 aa).

An N-terminal signal peptide occupies residues 1–20 (MIQVLLVIICLAVFPYQGSS). Residues 21–47 (IILESGNINDYEIVYPKKVAVLPTGAM) constitute a propeptide that is removed on maturation. The Disintegrin domain occupies 48–112 (NSVHPCCDPV…DCPRNRYKGK (65 aa)). Disulfide bonds link cysteine 53–cysteine 76, cysteine 67–cysteine 73, cysteine 72–cysteine 97, and cysteine 85–cysteine 104. The Cell attachment site; atypical (MLD) signature appears at 89-91 (MLD).

It belongs to the disintegrin family. Dimeric disintegrin subfamily. In terms of assembly, heterodimer with subunit beta; disulfide-linked. Expressed by the venom gland.

It localises to the secreted. In terms of biological role, potently inhibits adhesion of alpha-4/beta-1 (ITGA4/ITGB1) and alpha-9/beta-1 (ITGA9/ITGB1) integrins to VCAM1, and adhesion of alpha-5/beta-1 (ITGA5/ITGB1) integrin to fibronectin. Has a much less effect on alpha-IIb/beta-3 (ITGA2B/ITGB3) integrin. Also potently inhibits neutrophil migration across TNF-alpha-activated human umbilical endothelial cells. The protein is Disintegrin EC6 subunit alpha of Echis carinatus sochureki (Saw-scaled viper).